We begin with the raw amino-acid sequence, 336 residues long: uncharacterized protein (336 aa).

The segment at 196–222 (YKEGDDSNWDDFGSESEDDSKEAHSEE) is disordered. Acidic residues predominate over residues 201–215 (DSNWDDFGSESEDDS). The residue at position 211 (S211) is a Phosphoserine.

This is an uncharacterized protein from Schizosaccharomyces pombe (strain 972 / ATCC 24843) (Fission yeast).